Reading from the N-terminus, the 226-residue chain is UPF0173 metal-dependent hydrolase CHY_0920 (226 aa).

It belongs to the UPF0173 family.

In Carboxydothermus hydrogenoformans (strain ATCC BAA-161 / DSM 6008 / Z-2901), this protein is UPF0173 metal-dependent hydrolase CHY_0920.